The following is a 470-amino-acid chain: tRNA (guanine(37)-N(1))-methyltransferase (470 aa).

Residues 304-305 (DL), 332-333 (DG), and Asn-370 each bind S-adenosyl-L-methionine.

Belongs to the class I-like SAM-binding methyltransferase superfamily. TRM5/TYW2 family. As to quaternary structure, monomer.

Its subcellular location is the mitochondrion matrix. It localises to the nucleus. The protein localises to the cytoplasm. The catalysed reaction is guanosine(37) in tRNA + S-adenosyl-L-methionine = N(1)-methylguanosine(37) in tRNA + S-adenosyl-L-homocysteine + H(+). In terms of biological role, specifically methylates the N1 position of guanosine-37 in various cytoplasmic and mitochondrial tRNAs. Methylation is not dependent on the nature of the nucleoside 5' of the target nucleoside. This is the first step in the biosynthesis of wybutosine (yW), a modified base adjacent to the anticodon of tRNAs and required for accurate decoding. The protein is tRNA (guanine(37)-N(1))-methyltransferase of Theileria parva (East coast fever infection agent).